The following is a 184-amino-acid chain: GTP cyclohydrolase 1 (184 aa).

3 residues coordinate Zn(2+): Cys-75, His-78, and Cys-146.

The protein belongs to the GTP cyclohydrolase I family. In terms of assembly, homomer.

The catalysed reaction is GTP + H2O = 7,8-dihydroneopterin 3'-triphosphate + formate + H(+). The protein operates within cofactor biosynthesis; 7,8-dihydroneopterin triphosphate biosynthesis; 7,8-dihydroneopterin triphosphate from GTP: step 1/1. The sequence is that of GTP cyclohydrolase 1 from Streptococcus pneumoniae (strain Taiwan19F-14).